The primary structure comprises 91 residues: DNA-binding protein HU (91 aa).

This sequence belongs to the bacterial histone-like protein family.

Histone-like DNA-binding protein which is capable of wrapping DNA to stabilize it, and thus to prevent its denaturation under extreme environmental conditions. Also seems to act as a fortuitous virulence factor in delayed sequelae by binding to heparan sulfate-proteoglycans in the extracellular matrix of target organs and acting as a nidus for in situ immune complex formation. This is DNA-binding protein HU (hup) from Streptococcus gordonii.